The sequence spans 119 residues: MSLDQYLPIFLFILVGIGVGVAPQVLGYILGPNLPDSAKNSPYECGFEAFGDARMKFDVRYYLVAILFILFDLEIAFLFPWAVALKDIGALGFWSVMVFLTILVVGFIYEWKKGALDWE.

3 consecutive transmembrane segments (helical) span residues Ile9–Ile29, Leu63–Val83, and Ile88–Ile108.

This sequence belongs to the complex I subunit 3 family. NDH-1 is composed of 14 different subunits. Subunits NuoA, H, J, K, L, M, N constitute the membrane sector of the complex.

It localises to the cell inner membrane. The catalysed reaction is a quinone + NADH + 5 H(+)(in) = a quinol + NAD(+) + 4 H(+)(out). Functionally, NDH-1 shuttles electrons from NADH, via FMN and iron-sulfur (Fe-S) centers, to quinones in the respiratory chain. The immediate electron acceptor for the enzyme in this species is believed to be ubiquinone. Couples the redox reaction to proton translocation (for every two electrons transferred, four hydrogen ions are translocated across the cytoplasmic membrane), and thus conserves the redox energy in a proton gradient. The chain is NADH-quinone oxidoreductase subunit A from Albidiferax ferrireducens (strain ATCC BAA-621 / DSM 15236 / T118) (Rhodoferax ferrireducens).